A 468-amino-acid chain; its full sequence is ATP synthase subunit beta (468 aa).

155 to 162 (GGAGVGKT) contributes to the ATP binding site.

The protein belongs to the ATPase alpha/beta chains family. As to quaternary structure, F-type ATPases have 2 components, CF(1) - the catalytic core - and CF(0) - the membrane proton channel. CF(1) has five subunits: alpha(3), beta(3), gamma(1), delta(1), epsilon(1). CF(0) has three main subunits: a(1), b(2) and c(9-12). The alpha and beta chains form an alternating ring which encloses part of the gamma chain. CF(1) is attached to CF(0) by a central stalk formed by the gamma and epsilon chains, while a peripheral stalk is formed by the delta and b chains.

Its subcellular location is the cell inner membrane. It carries out the reaction ATP + H2O + 4 H(+)(in) = ADP + phosphate + 5 H(+)(out). Produces ATP from ADP in the presence of a proton gradient across the membrane. The catalytic sites are hosted primarily by the beta subunits. The sequence is that of ATP synthase subunit beta from Thermotoga neapolitana (strain ATCC 49049 / DSM 4359 / NBRC 107923 / NS-E).